The primary structure comprises 2089 residues: Non-reducing polyketide synthase PKS16 (2089 aa).

The tract at residues 8–243 (VLFGDQTVDP…IKLPITAAFH (236 aa)) is N-terminal acylcarrier protein transacylase (SAT) domain (SAT). A disordered region spans residues 342–364 (AGIEVSRSTEMQPRQEQRTKPRS). Residues 354-364 (PRQEQRTKPRS) show a composition bias toward basic and acidic residues. Residues 364–793 (SSDIAIIGYA…GGNTSLLIED (430 aa)) enclose the Ketosynthase family 3 (KS3) domain. Catalysis depends on for beta-ketoacyl synthase activity residues C536, H671, and H710. The segment at 891–1214 (VFLFTGQGSQ…SIANAYNSGV (324 aa)) is malonyl-CoA:ACP transacylase (MAT) domain. Positions 1273-1586 (TTCLQVIENE…KRTTLQSLLG (314 aa)) are product template (PT) domain. The N-terminal hotdog fold stretch occupies residues 1276 to 1408 (LQVIENETFT…CTVMYGDGHQ (133 aa)). Residues 1276–1582 (LQVIENETFT…FQQMKRTTLQ (307 aa)) enclose the PKS/mFAS DH domain. The Proton acceptor; for dehydratase activity role is filled by H1309. The segment at 1435–1582 (IHRMLKEMIY…FQQMKRTTLQ (148 aa)) is C-terminal hotdog fold. The Proton donor; for dehydratase activity role is filled by D1495. Positions 1617–1694 (QSPVAGFSKV…ELRAFFLDKM (78 aa)) constitute a Carrier 1 domain. O-(pantetheine 4'-phosphoryl)serine is present on S1654. A disordered region spans residues 1697-1730 (PQATANDDDSDDSSDDEGPGFSRSQSNSTISTPE). The span at 1702–1714 (NDDDSDDSSDDEG) shows a compositional bias: acidic residues. A compositionally biased stretch (polar residues) spans 1718 to 1728 (SRSQSNSTIST). Positions 1729–1806 (PEEPDVVNVL…DVQKALGAAP (78 aa)) constitute a Carrier 2 domain. S1766 is subject to O-(pantetheine 4'-phosphoryl)serine. The segment at 1848 to 2083 (LFLLPDGAGS…VVGGNHFSIM (236 aa)) is thioesterase (TE) domain.

It participates in secondary metabolite biosynthesis. In terms of biological role, non-reducing polyketide synthase; part of the gene cluster that mediates the biosynthesis of orcinol depsidone grayanic acid (GRA), the only major secondary metabolite known in C.grayi. The first step consists in the ring and depside synthesis by PKS16 leading to 4-O-demethylsphaerophorin, involving different orcinol-like rings, one with acetyl CoA and the other with octanoyl CoA as the starter. Further depsidone formation by the GRA cluster-specific cytochrome P450 leads to 4-O-demethylgrayanic acid. Finally, the cluster specific O-methyltransferase probably converts the 4-O-demethylgrayanic acid into grayanic acid. The chain is Non-reducing polyketide synthase PKS16 from Cladonia grayi (Gray's cup lichen).